The chain runs to 601 residues: ATP-dependent lipid A-core flippase (601 aa).

Helical transmembrane passes span 27–47 (IGLFLISIVGFLIFASTQPML), 83–103 (LLIVLIAAWQGLGSYLGNYFL), 174–194 (LLWMNWRLTLVMIAILPLIAV), and 267–287 (PLLQLVIYSAMAVLMFLVLYL). The ABC transmembrane type-1 domain occupies 31-322 (LISIVGFLIF…LSEVSSTIQK (292 aa)). An ABC transporter domain is found at 354-590 (LEVRNLSFTY…NGYYSRLHAM (237 aa)). Residue 388-395 (GRSGSGKS) participates in ATP binding.

This sequence belongs to the ABC transporter superfamily. Lipid exporter (TC 3.A.1.106) family. In terms of assembly, homodimer.

The protein localises to the cell inner membrane. The enzyme catalyses ATP + H2O + lipid A-core oligosaccharideSide 1 = ADP + phosphate + lipid A-core oligosaccharideSide 2.. Functionally, involved in lipopolysaccharide (LPS) biosynthesis. Translocates lipid A-core from the inner to the outer leaflet of the inner membrane. Transmembrane domains (TMD) form a pore in the inner membrane and the ATP-binding domain (NBD) is responsible for energy generation. This Pseudomonas fluorescens (strain ATCC BAA-477 / NRRL B-23932 / Pf-5) protein is ATP-dependent lipid A-core flippase.